Reading from the N-terminus, the 62-residue chain is Phyllokinin-1 (62 aa).

An N-terminal signal peptide occupies residues 1–19 (MSFLKKSLFLVLFLGLVSS). A propeptide spanning residues 20-48 (SICEEEKRETEEEENEDEIEEESEEKKRE) is cleaved from the precursor. Residues 22-62 (CEEEKRETEEEENEDEIEEESEEKKREDPERPPGFTPFRVY) are disordered. The segment covering 30–42 (EEEENEDEIEEES) has biased composition (acidic residues). Residues 43-52 (EEKKREDPER) are compositionally biased toward basic and acidic residues. Tyr-62 is subject to Sulfotyrosine; partial.

Belongs to the frog skin active peptide (FSAP) family. Bradykinin-related peptide subfamily. Post-translationally, asp,Pro,Glu-[Thr6,Val10]-phyllokinin and [Thr6,Val10]-phyllokinin occur in sulfated and nonsulfated forms. [Thr6]-bradykinin and Des-Arg-[Thr6]-bradykinin are nonsulfated. As to expression, expressed by the skin glands.

The protein resides in the secreted. Its function is as follows. Inhibits ACE with a Ki of 1.6 uM, and targets B2 bradykinin receptor (BDKRB2). Provokes contraction of smooth muscle preparation (ileum). In vivo, induces an early hyperalgesic effects in living rats after intraplantar injection. The chain is Phyllokinin-1 from Pithecopus azureus (Orange-legged monkey tree frog).